The sequence spans 744 residues: Tripartite motif-containing protein 2 (744 aa).

Serine 10 carries the post-translational modification Phosphoserine. The RING-type zinc finger occupies 23–64 (CSICLERYKNPKVLPCLHTFCERCLQNYIPAHSLTLSCPVCR). A B box-type zinc finger spans residues 113 to 154 (GKPLSCPNHDGNVMEFYCQSCETAMCRECTEGEHAEHPTVPL). 4 residues coordinate Zn(2+): cysteine 118, histidine 121, cysteine 141, and histidine 146. The stretch at 320 to 421 (TTNAVASETV…IRGSPFKLKV (102 aa)) is one Filamin repeat. Threonine 371 bears the Phosphothreonine mark. Serine 375, serine 424, and serine 428 each carry phosphoserine. A disordered region spans residues 432-462 (EGVKRRVKSPGSGHVKQKAVKRPASMYSTGK). NHL repeat units follow at residues 473-516 (IFRV…FSND), 520-563 (KSRF…FSSD), 564-605 (GKFK…FQPN), 609-652 (VTRF…FNQE), 656-699 (MLKF…FDGS), and 700-743 (GSFL…YRYL).

This sequence belongs to the TRIM/RBCC family. As to quaternary structure, forms homooligomers. Interacts with TRIM3; this interaction reduces TRIM2 activity. Interacts with myosin V; myosin V may not be a substrate for ubiquitination. Interacts with NEFL. Interacts with phosphorylated BCL2L11. Interacts with SIRPA. In terms of processing, RING-type zinc finger-dependent and UBE2D1-dependent autoubiquitination.

It localises to the cytoplasm. The catalysed reaction is S-ubiquitinyl-[E2 ubiquitin-conjugating enzyme]-L-cysteine + [acceptor protein]-L-lysine = [E2 ubiquitin-conjugating enzyme]-L-cysteine + N(6)-ubiquitinyl-[acceptor protein]-L-lysine.. It participates in protein modification; protein ubiquitination. In terms of biological role, UBE2D1-dependent E3 ubiquitin-protein ligase that mediates the ubiquitination of NEFL and of phosphorylated BCL2L11. Plays a neuroprotective function. May play a role in neuronal rapid ischemic tolerance. Plays a role in antiviral immunity and limits New World arenavirus infection independently of its ubiquitin ligase activity. This chain is Tripartite motif-containing protein 2 (TRIM2), found in Callithrix jacchus (White-tufted-ear marmoset).